The following is a 447-amino-acid chain: Phospholipase A(1) DAD1, chloroplastic (447 aa).

The transit peptide at 1–46 (MRFSLSPVRPHSVVVPSLPKQDVVSYISGTTSNRQCRCVLTLPSPS) directs the protein to the chloroplast. Residues 293–297 (GHSLG) carry the GXSXG motif. Residue serine 295 is the Acyl-ester intermediate of the active site. Active-site charge relay system residues include aspartate 352 and histidine 418.

Belongs to the AB hydrolase superfamily. Lipase family. As to expression, expressed in flower buds, but not in leaves or roots. Restricted to the stamen filaments immediately before flower opening.

The protein resides in the plastid. Its subcellular location is the chloroplast. The catalysed reaction is a 1,2-diacyl-sn-glycero-3-phosphocholine + H2O = a 2-acyl-sn-glycero-3-phosphocholine + a fatty acid + H(+). It carries out the reaction 1-hexadecanoyl-2-(9Z,12Z-octadecadienoyl)-sn-glycero-3-phosphocholine + H2O = 2-(9Z,12Z-octadecadienoyl)-sn-glycero-3-phosphocholine + hexadecanoate + H(+). Sn-1-specific phospholipase that releases free fatty acids from phospholipids. Low activity on galactolipids and triacylglycerols. Catalyzes the initial step of jasmonic acid biosynthesis. Not essential for jasmonate biosynthesis after wounding or upon pathogen infection. The protein is Phospholipase A(1) DAD1, chloroplastic of Arabidopsis thaliana (Mouse-ear cress).